A 257-amino-acid polypeptide reads, in one-letter code: RNA polymerase sigma-G factor (257 aa).

Residues 66-79 (DLFQVGCIGLIKSI) carry the Polymerase core binding motif. Residues 228-247 (QMEVADEIGISQAQVSRLEK) constitute a DNA-binding region (H-T-H motif).

It belongs to the sigma-70 factor family.

Functionally, sigma factors are initiation factors that promote the attachment of RNA polymerase to specific initiation sites and are then released. This sigma factor is responsible for the expression of sporulation specific genes. The polypeptide is RNA polymerase sigma-G factor (sigG) (Clostridium acetobutylicum (strain ATCC 824 / DSM 792 / JCM 1419 / IAM 19013 / LMG 5710 / NBRC 13948 / NRRL B-527 / VKM B-1787 / 2291 / W)).